A 431-amino-acid polypeptide reads, in one-letter code: Chaperone SurA (431 aa).

A signal peptide spans 1–22 (MNLKKLLTSAVLSISLCQSAFA). PpiC domains are found at residues 173–274 (AEEY…KVQD) and 283–383 (TTET…QLLD).

It localises to the periplasm. It carries out the reaction [protein]-peptidylproline (omega=180) = [protein]-peptidylproline (omega=0). Chaperone involved in the correct folding and assembly of outer membrane proteins. Recognizes specific patterns of aromatic residues and the orientation of their side chains, which are found more frequently in integral outer membrane proteins. May act in both early periplasmic and late outer membrane-associated steps of protein maturation. The polypeptide is Chaperone SurA (Pseudoalteromonas translucida (strain TAC 125)).